A 132-amino-acid polypeptide reads, in one-letter code: Small ribosomal subunit protein uS8 (132 aa).

The protein belongs to the universal ribosomal protein uS8 family. In terms of assembly, part of the 30S ribosomal subunit. Contacts proteins S5 and S12.

One of the primary rRNA binding proteins, it binds directly to 16S rRNA central domain where it helps coordinate assembly of the platform of the 30S subunit. In Ligilactobacillus salivarius (strain UCC118) (Lactobacillus salivarius), this protein is Small ribosomal subunit protein uS8.